The chain runs to 235 residues: 7-cyano-7-deazaguanine synthase (235 aa).

Residue 16–26 (FSGGQDSTTCL) participates in ATP binding. Zn(2+)-binding residues include Cys-195, Cys-204, Cys-207, and Cys-210.

The protein belongs to the QueC family. Requires Zn(2+) as cofactor.

It carries out the reaction 7-carboxy-7-deazaguanine + NH4(+) + ATP = 7-cyano-7-deazaguanine + ADP + phosphate + H2O + H(+). It functions in the pathway purine metabolism; 7-cyano-7-deazaguanine biosynthesis. In terms of biological role, catalyzes the ATP-dependent conversion of 7-carboxy-7-deazaguanine (CDG) to 7-cyano-7-deazaguanine (preQ(0)). The sequence is that of 7-cyano-7-deazaguanine synthase from Shewanella frigidimarina (strain NCIMB 400).